The primary structure comprises 639 residues: Transcription factor phomR' (639 aa).

Positions C14 to C41 form a DNA-binding region, zn(2)-C6 fungal-type. 2 disordered regions span residues R58 to G136 and L476 to E499. Residues S68–S108 are compositionally biased toward low complexity.

It is found in the nucleus. Functionally, transcription factor; part of the gene cluster that mediates the biosynthesis of the phomopsins, a group of hexapeptide mycotoxins which infects lupins and causes lupinosis disease in livestock. May play a role in the regulation of the production of phomopsins. This Diaporthe leptostromiformis (Lupinosis disease fungus) protein is Transcription factor phomR'.